We begin with the raw amino-acid sequence, 335 residues long: Cathepsin B (335 aa).

The first 17 residues, 1 to 17 (MWRLLATLSCLVLLTSA), serve as a signal peptide directing secretion. Positions 18–79 (RESLHFQPLS…QRAAFAADMI (62 aa)) are cleaved as a propeptide — activation peptide. Intrachain disulfides connect Cys-93-Cys-122, Cys-105-Cys-150, Cys-141-Cys-207, Cys-142-Cys-146, Cys-179-Cys-211, and Cys-187-Cys-198. Cys-108 is an active-site residue. N-linked (GlcNAc...) asparagine glycosylation is present at Asn-192. Lys-220 carries the N6-acetyllysine modification. A disulfide bond links Cys-227 and Cys-331. Residues His-278 and Asn-298 contribute to the active site. The propeptide occupies 333 to 335 (PHF).

This sequence belongs to the peptidase C1 family. As to quaternary structure, dimer of a heavy chain and a light chain cross-linked by a disulfide bond. Interacts with SRPX2. Directly interacts with SHKBP1. As to expression, expressed in heart (at protein level).

The protein resides in the lysosome. The protein localises to the melanosome. It localises to the secreted. Its subcellular location is the extracellular space. It is found in the apical cell membrane. The catalysed reaction is Hydrolysis of proteins with broad specificity for peptide bonds. Preferentially cleaves -Arg-Arg-|-Xaa bonds in small molecule substrates (thus differing from cathepsin L). In addition to being an endopeptidase, shows peptidyl-dipeptidase activity, liberating C-terminal dipeptides.. Functionally, thiol protease which is believed to participate in intracellular degradation and turnover of proteins. Cleaves matrix extracellular phosphoglycoprotein MEPE. Involved in the solubilization of cross-linked TG/thyroglobulin in the thyroid follicle lumen. Has also been implicated in tumor invasion and metastasis. The protein is Cathepsin B (CTSB) of Sus scrofa (Pig).